Reading from the N-terminus, the 254-residue chain is D-aminoacyl-tRNA deacylase (254 aa).

The protein belongs to the DtdA deacylase family. Monomer. Zn(2+) is required as a cofactor.

The catalysed reaction is a D-aminoacyl-tRNA + H2O = a tRNA + a D-alpha-amino acid + H(+). It carries out the reaction glycyl-tRNA(Ala) + H2O = tRNA(Ala) + glycine + H(+). Its function is as follows. D-aminoacyl-tRNA deacylase with broad substrate specificity. By recycling D-aminoacyl-tRNA to D-amino acids and free tRNA molecules, this enzyme counteracts the toxicity associated with the formation of D-aminoacyl-tRNA entities in vivo. The polypeptide is D-aminoacyl-tRNA deacylase (Methanococcus vannielii (strain ATCC 35089 / DSM 1224 / JCM 13029 / OCM 148 / SB)).